A 101-amino-acid polypeptide reads, in one-letter code: Interleukin-8 (101 aa).

The first 22 residues, 1–22 (MPSQLRVAVLAAFLLSAVLCEG), serve as a signal peptide directing secretion. Disulfide bonds link C34-C61 and C36-C77.

Belongs to the intercrine alpha (chemokine CxC) family. In terms of assembly, homodimer. Interacts with TNFAIP6 (via Link domain); this interaction interferes with chemokine binding to glycosaminoglycans.

The protein localises to the secreted. In terms of biological role, chemotactic factor that mediates inflammatory response by attracting neutrophils, basophils, and T-cells to clear pathogens and protect the host from infection. Also plays an important role in neutrophil activation. Released in response to an inflammatory stimulus, exerts its effect by binding to the G-protein-coupled receptors CXCR1 and CXCR2, primarily found in neutrophils, monocytes and endothelial cells. G-protein heterotrimer (alpha, beta, gamma subunits) constitutively binds to CXCR1/CXCR2 receptor and activation by IL8 leads to beta and gamma subunits release from Galpha (GNAI2 in neutrophils) and activation of several downstream signaling pathways including PI3K and MAPK pathways. This chain is Interleukin-8 (CXCL8), found in Cavia porcellus (Guinea pig).